A 438-amino-acid polypeptide reads, in one-letter code: Adenylosuccinate synthetase (438 aa).

GTP contacts are provided by residues 13-19 and 41-43; these read GDEGKGK and GHT. D14 functions as the Proton acceptor in the catalytic mechanism. 2 residues coordinate Mg(2+): D14 and G41. IMP contacts are provided by residues 14–17, 39–42, T130, R144, Q225, T240, and R310; these read DEGK and NAGH. The Proton donor role is filled by H42. A substrate-binding site is contributed by 306-312; the sequence is ATTGRLR. Residues R312, 338-340, and 421-423 each bind GTP; these read KLD and STG.

Belongs to the adenylosuccinate synthetase family. As to quaternary structure, homodimer. Mg(2+) is required as a cofactor.

The protein resides in the cytoplasm. It catalyses the reaction IMP + L-aspartate + GTP = N(6)-(1,2-dicarboxyethyl)-AMP + GDP + phosphate + 2 H(+). It participates in purine metabolism; AMP biosynthesis via de novo pathway; AMP from IMP: step 1/2. In terms of biological role, plays an important role in the de novo pathway of purine nucleotide biosynthesis. Catalyzes the first committed step in the biosynthesis of AMP from IMP. The polypeptide is Adenylosuccinate synthetase (Vibrio parahaemolyticus serotype O3:K6 (strain RIMD 2210633)).